A 199-amino-acid chain; its full sequence is SCO2-like protein RC0042 (199 aa).

The protein belongs to the SCO1/2 family.

This Rickettsia conorii (strain ATCC VR-613 / Malish 7) protein is SCO2-like protein RC0042.